The sequence spans 497 residues: Probable small intestine urate exporter (497 aa).

Residues Asn-47, Asn-56, Asn-66, Asn-75, and Asn-90 are each glycosylated (N-linked (GlcNAc...) asparagine). A run of 10 helical transmembrane segments spans residues 149–169 (SFLTLFIPLAANAGVALLIVL), 171–191 (IVQGIAQVMVLTGQYSIWVKW), 203–223 (IAGSGSMLGSFIVLLAGGLLC), 230–250 (YVFYIFGGIGCACCPLWFPLI), 292–312 (LPLWAILVSYFCEYWLFYTIM), 332–352 (ILSALPFVVGCICIILGGLLA), 368–388 (KLFTAIGVLFPSVILVSLPWV), 398–418 (FLVLSSAISSFCESGALVNFL), 431–451 (LLQVFAHIAGAISPTAAGFFI), and 461–481 (NVFLLSAAVNISGLVFYLIFG).

It belongs to the major facilitator superfamily. Sodium/anion cotransporter family. In terms of tissue distribution, abundantly expressed in pancreas, liver, colon and small intestine, less in kidney. Not detected in the adrenal glands, brain, placenta, heart, testis, skeletal muscle, and lungs.

It localises to the apical cell membrane. It carries out the reaction 3 Na(+)(out) + phosphate(out) = 3 Na(+)(in) + phosphate(in). It catalyses the reaction urate(out) + n chloride(in) = urate(in) + n chloride(out). The enzyme catalyses L-thyroxine(out) = L-thyroxine(in). The catalysed reaction is 3,3',5-triiodo-L-thyronine(out) = 3,3',5-triiodo-L-thyronine(in). In terms of biological role, acts as a membrane potential-dependent organic anion transporter, the transport requires a low concentration of chloride ions. Mediates chloride-dependent transport of urate. Mediates sodium-independent high affinity transport of thyroid hormones including L-thyroxine (T4) and 3,3',5-triiodo-L-thyronine (T3). Can actively transport inorganic phosphate into cells via Na(+) cotransport. The chain is Probable small intestine urate exporter (SLC17A4) from Homo sapiens (Human).